A 282-amino-acid chain; its full sequence is ATP phosphoribosyltransferase (282 aa).

It belongs to the ATP phosphoribosyltransferase family. Long subfamily. Requires Mg(2+) as cofactor.

The protein localises to the cytoplasm. It carries out the reaction 1-(5-phospho-beta-D-ribosyl)-ATP + diphosphate = 5-phospho-alpha-D-ribose 1-diphosphate + ATP. It functions in the pathway amino-acid biosynthesis; L-histidine biosynthesis; L-histidine from 5-phospho-alpha-D-ribose 1-diphosphate: step 1/9. With respect to regulation, feedback inhibited by histidine. Functionally, catalyzes the condensation of ATP and 5-phosphoribose 1-diphosphate to form N'-(5'-phosphoribosyl)-ATP (PR-ATP). Has a crucial role in the pathway because the rate of histidine biosynthesis seems to be controlled primarily by regulation of HisG enzymatic activity. This is ATP phosphoribosyltransferase from Halobacterium salinarum (strain ATCC 29341 / DSM 671 / R1).